The chain runs to 108 residues: MAEAWRYSAQGVAVAVRVTPRGDRDEIDGLETLSDGRPVVKLRVRAIADGGEANRAVIELLAKALGVPKRNVRLLSGATSRQKQIAIDGDPKSLGETLRQLTAAKPAG.

Belongs to the UPF0235 family.

The sequence is that of UPF0235 protein RPB_0109 from Rhodopseudomonas palustris (strain HaA2).